We begin with the raw amino-acid sequence, 903 residues long: MTRSCSAVGCSTRDTVLSRERGLSFHQFPTDTIQRSKWIRAVNRVDPRSKKIWIPGPGAILCSKHFQESDFESYGIRRKLKKGAVPSVSLYKIPQGVHLKGKARQKILKQPLPDNSQEVATEDHNYSLKTPLTIGAEKLAEVQQMLQVSKKRLISVKNYRMIKKRKGLRLIDALVEEKLLSEETECLLRAQFSDFKWELYNWRETDEYSAEMKQFACTLYLCSSKVYDYVRKILKLPHSSILRTWLSKCQPSPGFNSNIFSFLQRRVENGDQLYQYCSLLIKSMPLKQQLQWDPSSHSLQGFMDFGLGKLDADETPLASETVLLMAVGIFGHWRTPLGYFFVNRASGYLQAQLLRLTIGKLSDIGITVLAVTSDATAHSVQMAKALGIHIDGDDMKCTFQHPSSSSQQIAYFFDSCHLLRLIRNAFQNFQSIQFINGIAHWQHLVELVALEEQELSNMERIPSTLANLKNHVLKVNSATQLFSESVASALEYLLSLDLPPFQNCIGTIHFLRLINNLFDIFNSRNCYGKGLKGPLLPETYSKINHVLIEAKTIFVTLSDTSNNQIIKGKQKLGFLGFLLNAESLKWLYQNYVFPKVMPFPYLLTYKFSHDHLELFLKMLRQVLVTSSSPTCMAFQKAYYNLETRYKFQDEVFLSKVSIFDISIARRKDLALWTVQRQYGVSVTKTVFHEEGICQDWSHCSLSEALLDLSDHRRNLICYAGYVANKLSALLTCEDCITALYASDLKASKIGSLLFVKKKNGLHFPSESLCRVINICERVVRTHSRMAIFELVSKQRELYLQQKILCELSGHINLFVDVNKHLFDGEVCAINHFVKLLKDIIICFLNIRAKNVAQNPLKHHSERTDMKTLSRKHWSSVQDYKCSSFANTSSKFRHLLSNDGYPFK.

The segment at 1–89 (MTRSCSAVGC…LKKGAVPSVS (89 aa)) adopts a THAP-type zinc-finger fold. The short motif at 123 to 126 (DHNY) is the HCFC1-binding motif (HBM) element.

In terms of biological role, active transposase that specifically recognizes the bipartite 5'-TXXGGGX(A/T)-3' consensus motif and mediates transposition. This chain is DNA transposase THAP9 (THAP9), found in Homo sapiens (Human).